Reading from the N-terminus, the 242-residue chain is Uridylate kinase (242 aa).

Position 11 to 14 (11 to 14 (KLSG)) interacts with ATP. An involved in allosteric activation by GTP region spans residues 19–24 (GNMGYG). Glycine 53 provides a ligand contact to UMP. Residues glycine 54 and arginine 58 each contribute to the ATP site. Residues aspartate 73 and 134 to 141 (SGNPFFTT) each bind UMP. The ATP site is built by threonine 161, tyrosine 167, and aspartate 170.

The protein belongs to the UMP kinase family. In terms of assembly, homohexamer.

It localises to the cytoplasm. The catalysed reaction is UMP + ATP = UDP + ADP. The protein operates within pyrimidine metabolism; CTP biosynthesis via de novo pathway; UDP from UMP (UMPK route): step 1/1. Allosterically activated by GTP. Inhibited by UTP. Catalyzes the reversible phosphorylation of UMP to UDP. In Trichormus variabilis (strain ATCC 29413 / PCC 7937) (Anabaena variabilis), this protein is Uridylate kinase.